The chain runs to 214 residues: uncharacterized protein (214 aa).

A helical membrane pass occupies residues 9–31 (FLYFAISVLVNLLFLKILYIYLF). The tract at residues 53–74 (APPKKPGKPQKKVVKKKPEAVS) is disordered. Positions 54–67 (PPKKPGKPQKKVVK) are enriched in basic residues.

It is found in the membrane. This is an uncharacterized protein from Aquifex aeolicus (strain VF5).